Here is a 113-residue protein sequence, read N- to C-terminus: Large ribosomal subunit protein uL22 (113 aa).

This sequence belongs to the universal ribosomal protein uL22 family. Part of the 50S ribosomal subunit.

This protein binds specifically to 23S rRNA; its binding is stimulated by other ribosomal proteins, e.g. L4, L17, and L20. It is important during the early stages of 50S assembly. It makes multiple contacts with different domains of the 23S rRNA in the assembled 50S subunit and ribosome. Functionally, the globular domain of the protein is located near the polypeptide exit tunnel on the outside of the subunit, while an extended beta-hairpin is found that lines the wall of the exit tunnel in the center of the 70S ribosome. This Stenotrophomonas maltophilia (strain K279a) protein is Large ribosomal subunit protein uL22.